The chain runs to 1183 residues: DNA-directed RNA polymerase subunit beta (1183 aa).

It belongs to the RNA polymerase beta chain family. As to quaternary structure, the RNAP catalytic core consists of 2 alpha, 1 beta, 1 beta' and 1 omega subunit. When a sigma factor is associated with the core the holoenzyme is formed, which can initiate transcription.

It carries out the reaction RNA(n) + a ribonucleoside 5'-triphosphate = RNA(n+1) + diphosphate. DNA-dependent RNA polymerase catalyzes the transcription of DNA into RNA using the four ribonucleoside triphosphates as substrates. This Staphylococcus aureus (strain Mu50 / ATCC 700699) protein is DNA-directed RNA polymerase subunit beta.